An 816-amino-acid polypeptide reads, in one-letter code: Fibroblast growth factor receptor 1 (816 aa).

The signal sequence occupies residues 1 to 23; the sequence is MLSWRHLVFWAMLVMATLSAARP. Topologically, residues 24–374 are extracellular; that stretch reads APTLPEQVSP…VIMTSPLYLE (351 aa). An Ig-like C2-type 1 domain is found at 25–118; it reads PTLPEQVSPK…ETTFFAVNVS (94 aa). An intrachain disulfide couples cysteine 54 to cysteine 100. Residues asparagine 76 and asparagine 116 are each glycosylated (N-linked (GlcNAc...) asparagine). Positions 118–152 are disordered; it reads SDRIPSVEDDDDDDEKSSSEEKEAENSKPNPVAPF. Over residues 133–143 the composition is skewed to basic and acidic residues; that stretch reads KSSSEEKEAEN. Ig-like C2-type domains follow at residues 156-244 and 253-355; these read PEKM…YQLD and PILQ…AWLT. A disulfide bridge connects residues cysteine 176 and cysteine 228. N-linked (GlcNAc...) asparagine glycosylation is found at asparagine 238, asparagine 262, asparagine 294, asparagine 315, and asparagine 328. Residues cysteine 275 and cysteine 339 are joined by a disulfide bond. A helical membrane pass occupies residues 375–395; the sequence is IIIYCTGAFLISCMLVTVIIY. The Cytoplasmic segment spans residues 396–816; it reads KMKNTTKKTD…QHANGGLKKR (421 aa). Tyrosine 459 bears the Phosphotyrosine; by autocatalysis mark. The region spanning 474 to 763 is the Protein kinase domain; it reads LILGKPLGEG…VAMTSNQEYL (290 aa). Residues 480-486, lysine 510, 558-560, and asparagine 564 each bind ATP; these read LGEGCFG and EYA. 2 positions are modified to phosphotyrosine; by autocatalysis: tyrosine 579 and tyrosine 581. The Proton acceptor role is filled by aspartate 619. Residues arginine 623 and aspartate 637 each contribute to the ATP site. A phosphotyrosine; by autocatalysis mark is found at tyrosine 649, tyrosine 650, tyrosine 726, and tyrosine 762. The disordered stretch occupies residues 776 to 816; sequence FPDTRSSTCSSGEDSVFSHDPLPDEPCLPKYQHANGGLKKR. Positions 779–788 are enriched in polar residues; the sequence is TRSSTCSSGE.

The protein belongs to the protein kinase superfamily. Tyr protein kinase family. Fibroblast growth factor receptor subfamily. As to quaternary structure, monomer. Homodimer after ligand binding. Autophosphorylated. Binding of FGF family members together with heparan sulfate proteoglycan or heparin promotes receptor dimerization and autophosphorylation on tyrosine residues. Autophosphorylation occurs in trans between the two FGFR molecules present in the dimer and proceeds in a highly ordered manner. Phosphotyrosine residues provide docking sites for interacting proteins and so are crucial for FGFR1 function and its regulation. In terms of processing, ubiquitinated. FGFR1 is rapidly ubiquitinated after autophosphorylation, leading to internalization and degradation. Post-translationally, N-glycosylated in the endoplasmic reticulum. The N-glycan chains undergo further maturation to an Endo H-resistant form in the Golgi apparatus.

Its subcellular location is the cell membrane. It is found in the nucleus. The protein localises to the cytoplasm. The protein resides in the cytosol. It localises to the cytoplasmic vesicle. The catalysed reaction is L-tyrosyl-[protein] + ATP = O-phospho-L-tyrosyl-[protein] + ADP + H(+). Present in an inactive conformation in the absence of bound ligand. Ligand binding leads to dimerization and activation by sequential autophosphorylation on tyrosine residues. Its function is as follows. Tyrosine-protein kinase that acts as a cell-surface receptor for fibroblast growth factors and plays an essential role in the regulation of embryonic development, cell proliferation, differentiation and migration. Required for normal mesoderm patterning and normal skeletogenesis. Phosphorylates PLCG1, FRS2, GAB1 and SHB. Ligand binding leads to the activation of several signaling cascades. Activation of PLCG1 leads to the production of the cellular signaling molecules diacylglycerol and inositol-1,4,5-trisphosphate. Phosphorylation of FRS2 triggers recruitment of GRB2, GAB1, PIK3R1 and SOS1, and mediates activation of RAS, MAPK1/ERK2, MAPK3/ERK1 and the MAP kinase signaling pathway, as well as of the AKT1 signaling pathway. Promotes phosphorylation of SHC1, STAT1 and PTPN11/SHP2. In the nucleus, enhances RPS6KA1 and CREB1 activity and contributes to the regulation of transcription. FGFR1 signaling is down-regulated by ubiquitination, internalization and degradation. The chain is Fibroblast growth factor receptor 1 (FGFR1) from Pleurodeles waltl (Iberian ribbed newt).